We begin with the raw amino-acid sequence, 75 residues long: Small integral membrane protein 7-A (75 aa).

The signal sequence occupies residues 1–17 (MIGDLLLFGTLLVNAGA). The Extracellular segment spans residues 18 to 53 (VLNFKLKKKESQGFGDDLTEATTGDNIREFLLSLRY). A helical membrane pass occupies residues 54–74 (FRIFIALWNIFMMFCMIVLFG). Position 75 (Ser75) is a topological domain, cytoplasmic.

The protein belongs to the SMIM7 family.

It is found in the membrane. The polypeptide is Small integral membrane protein 7-A (smim7-a) (Xenopus laevis (African clawed frog)).